The primary structure comprises 643 residues: Threonine--tRNA ligase (643 aa).

In terms of domain architecture, TGS spans methionine 1–threonine 61. Residues aspartate 243–proline 534 form a catalytic region. Residues cysteine 334, histidine 385, and histidine 511 each coordinate Zn(2+).

This sequence belongs to the class-II aminoacyl-tRNA synthetase family. In terms of assembly, homodimer. Requires Zn(2+) as cofactor.

The protein localises to the cytoplasm. It catalyses the reaction tRNA(Thr) + L-threonine + ATP = L-threonyl-tRNA(Thr) + AMP + diphosphate + H(+). Catalyzes the attachment of threonine to tRNA(Thr) in a two-step reaction: L-threonine is first activated by ATP to form Thr-AMP and then transferred to the acceptor end of tRNA(Thr). Also edits incorrectly charged L-seryl-tRNA(Thr). The sequence is that of Threonine--tRNA ligase from Actinobacillus pleuropneumoniae serotype 5b (strain L20).